A 188-amino-acid chain; its full sequence is Probable nicotinate-nucleotide adenylyltransferase (188 aa).

The protein belongs to the NadD family.

It carries out the reaction nicotinate beta-D-ribonucleotide + ATP + H(+) = deamido-NAD(+) + diphosphate. Its pathway is cofactor biosynthesis; NAD(+) biosynthesis; deamido-NAD(+) from nicotinate D-ribonucleotide: step 1/1. In terms of biological role, catalyzes the reversible adenylation of nicotinate mononucleotide (NaMN) to nicotinic acid adenine dinucleotide (NaAD). The chain is Probable nicotinate-nucleotide adenylyltransferase from Rhizobium meliloti (strain 1021) (Ensifer meliloti).